A 259-amino-acid polypeptide reads, in one-letter code: Global transcriptional regulator CodY (259 aa).

Residues 1-155 (MNLLEKTRQL…SATVVGMEIL (155 aa)) are GAF domain. The segment at residues 203–222 (ASKIADRVGITRSVIVNALR) is a DNA-binding region (H-T-H motif).

Belongs to the CodY family.

It is found in the cytoplasm. Functionally, DNA-binding global transcriptional regulator which is involved in the adaptive response to starvation and acts by directly or indirectly controlling the expression of numerous genes in response to nutrient availability. During rapid exponential growth, CodY is highly active and represses genes whose products allow adaptation to nutrient depletion. The protein is Global transcriptional regulator CodY of Exiguobacterium sp. (strain ATCC BAA-1283 / AT1b).